We begin with the raw amino-acid sequence, 72 residues long: Translation initiation factor IF-1 (72 aa).

An S1-like domain is found at 1–72 (MAKDDVIEVD…DKGRITFRYK (72 aa)).

It belongs to the IF-1 family. As to quaternary structure, component of the 30S ribosomal translation pre-initiation complex which assembles on the 30S ribosome in the order IF-2 and IF-3, IF-1 and N-formylmethionyl-tRNA(fMet); mRNA recruitment can occur at any time during PIC assembly.

The protein localises to the cytoplasm. Its function is as follows. One of the essential components for the initiation of protein synthesis. Stabilizes the binding of IF-2 and IF-3 on the 30S subunit to which N-formylmethionyl-tRNA(fMet) subsequently binds. Helps modulate mRNA selection, yielding the 30S pre-initiation complex (PIC). Upon addition of the 50S ribosomal subunit IF-1, IF-2 and IF-3 are released leaving the mature 70S translation initiation complex. The chain is Translation initiation factor IF-1 from Nitratiruptor sp. (strain SB155-2).